A 563-amino-acid chain; its full sequence is Arginine--tRNA ligase (563 aa).

The 'HIGH' region motif lies at 121-131 (PNIAKPFSIGH).

It belongs to the class-I aminoacyl-tRNA synthetase family. Monomer.

Its subcellular location is the cytoplasm. The enzyme catalyses tRNA(Arg) + L-arginine + ATP = L-arginyl-tRNA(Arg) + AMP + diphosphate. This Streptococcus mutans serotype c (strain ATCC 700610 / UA159) protein is Arginine--tRNA ligase.